A 283-amino-acid polypeptide reads, in one-letter code: GDP-polyphosphate phosphotransferase (283 aa).

Belongs to the polyphosphate kinase 2 (PPK2) family. Class I subfamily.

The enzyme catalyses [phosphate](n) + GTP = [phosphate](n+1) + GDP. Uses inorganic polyphosphate (polyP) as a donor to convert GDP to GTP. The protein is GDP-polyphosphate phosphotransferase of Mycolicibacterium smegmatis (strain ATCC 700084 / mc(2)155) (Mycobacterium smegmatis).